The chain runs to 700 residues: MARKTPIERYRNIGISAHIDAGKTTTTERILFYTGVNHKLGETHDGSATMDWMEQEQERGITITSAATTAFWRGMAGNYPEYRINIIDTPGHVDFTIEVERSMRVLDGACMVYCAVGGVQPQSETVWRQANKYGVPRLAFVNKMDRTGANFFKVYDQLKTRLRANPVPIVIPIGAEDSFTGVVDLVKMKAIIWDEASQGTKFEYGDIPAELEGTANEWREKLVEAAAESSEELMNKYLETGSLDEDDINVALRQRTIAGEIQPMLCGTAFKNKGVQRMLDAVIDYLPSPADIPPVDGQDDDGNPIKRSADDAEKFSALAFKLMSDPFVGQLTFVRVYSGVLKSGDTVYNPIKGKKERIGRLLQMHANNREEIKEVLAGDIAAVVGLKDVTTGETLCDIDSHILLERMEFPEPVISQAVEPKSKADQEKMGLALSRLAQEDPSFRVRSDEESGQTIISGMGELHLEILVDRMRREFGVEANVGKPQVAYRETIRKNCDEVEGKFVKQSGGRGQYGHVVLKLEPLPPGGGYEFVDAIKGGVVPREYIPAVDKGIQETLPAGILAGYPVVDVKATLFFGSYHDVDSNENAFKMAASMAFKEGMRRASPVLLEPMMAVEVETPEDYAGTVMGDLSSRRGMVQGMDDIVGGGKTIKAEVPLAEMFGYATNLRSLTQGRATYTMEFKHYAEAPKNVADEVIAARGK.

In terms of domain architecture, tr-type G spans 8 to 290 (ERYRNIGISA…AVIDYLPSPA (283 aa)). Residues 17 to 24 (AHIDAGKT), 88 to 92 (DTPGH), and 142 to 145 (NKMD) contribute to the GTP site.

Belongs to the TRAFAC class translation factor GTPase superfamily. Classic translation factor GTPase family. EF-G/EF-2 subfamily.

It localises to the cytoplasm. In terms of biological role, catalyzes the GTP-dependent ribosomal translocation step during translation elongation. During this step, the ribosome changes from the pre-translocational (PRE) to the post-translocational (POST) state as the newly formed A-site-bound peptidyl-tRNA and P-site-bound deacylated tRNA move to the P and E sites, respectively. Catalyzes the coordinated movement of the two tRNA molecules, the mRNA and conformational changes in the ribosome. The chain is Elongation factor G 1 from Bordetella parapertussis (strain 12822 / ATCC BAA-587 / NCTC 13253).